A 728-amino-acid polypeptide reads, in one-letter code: Ribosome biogenesis protein bop1-B (728 aa).

Residues 1 to 114 (MKRGSKRESG…ENDSSDEEDI (114 aa)) are disordered. Positions 50 to 67 (SGTDSSDDEEDHSSEEVQ) are enriched in acidic residues. 7 WD repeats span residues 393 to 432 (GHKDLVRCISVSPSGQWLVSGSDDCSVRFWEVSTGRCMKS), 434 to 474 (VLEG…RLLC), 514 to 556 (KHQK…SQNP), 559 to 597 (KNKGQVQKVLFHPTRPFFFVATQRYVRVYNLLKQELTKK), 600 to 639 (TNCKWVSSIAVHPAGDNLICGSYDSKLAWFDMDLSTKPYK), 643 to 682 (HHKKALRAVSFHKSYPLFASGSDDASVIVCHGMVYNDLLQ), and 698 to 728 (HRDLGVLDVMFHPTQPWVFSSGADGTIRLFT).

It belongs to the WD repeat BOP1/ERB1 family. In terms of assembly, component of the PeBoW complex, composed of bop1, pes1 and wdr12. The complex is held together by bop1, which interacts with pes1 via its N-terminal domain and with wdr12 via a high-affinity interaction between the seven-bladed beta-propeller domains of the 2 proteins. The PeBoW complex associates with the 66S pre-ribosome.

The protein resides in the nucleus. It localises to the nucleolus. Its subcellular location is the nucleoplasm. Its function is as follows. Component of the PeBoW complex, which is required for maturation of 28S and 5.8S ribosomal RNAs and formation of the 60S ribosome. This chain is Ribosome biogenesis protein bop1-B (bop1-b), found in Xenopus laevis (African clawed frog).